A 505-amino-acid polypeptide reads, in one-letter code: Surface lipoprotein assembly modifier 2 (505 aa).

The N-terminal stretch at 1–19 is a signal peptide; it reads MLYFRYGFLVVWCAAGVSA. The interval 23 to 188 is N-terminal domain; sequence ADAPAILDDK…RFRKKTEGLT (166 aa). The C-terminal probable beta barrel stretch occupies residues 189-505; the sequence is GWRFSGGISP…EVFVSADWRF (317 aa). 14 beta stranded membrane passes run 190 to 200, 232 to 243, 248 to 258, 273 to 283, 287 to 297, 326 to 335, 340 to 350, 368 to 377, 381 to 391, 411 to 420, 427 to 437, 456 to 465, 472 to 482, and 495 to 505; these read WRFSGGISPAV, LNYEIEAEKLTP, HYLLFRSNIGG, FGRAYLGWQYK, QTAGILPFYQV, VGVQLSHTYR, WQFSVALEHYR, GFYVSSAKRL, ATVFGGWQFVR, NGVYAGWAQE, LNSRVSASYAR, WNVSLALSHD, IVPALNYRFGR, and SEVFVSADWRF.

The protein belongs to the Slam family.

It localises to the cell outer membrane. Required for correct export to the cell surface of cell outer membrane lipoprotein HpuA heterologously in E.coli (hpuA does not exist in N.meningitidis strain MC58). This is Surface lipoprotein assembly modifier 2 from Neisseria meningitidis serogroup B (strain ATCC BAA-335 / MC58).